The following is a 247-amino-acid chain: DNA polymerase sliding clamp (247 aa).

Belongs to the PCNA family. As to quaternary structure, homotrimer. The subunits circularize to form a toroid; DNA passes through its center. Replication factor C (RFC) is required to load the toroid on the DNA.

In terms of biological role, sliding clamp subunit that acts as a moving platform for DNA processing. Responsible for tethering the catalytic subunit of DNA polymerase and other proteins to DNA during high-speed replication. The polypeptide is DNA polymerase sliding clamp (Methanospirillum hungatei JF-1 (strain ATCC 27890 / DSM 864 / NBRC 100397 / JF-1)).